Consider the following 654-residue polypeptide: Pyoverdine export ATP-binding/permease protein PvdT (654 aa).

An ABC transporter domain is found at 6-245 (IELCDIRKAY…QPEQLQANDL (240 aa)). 43–50 (GASGSGKS) serves as a coordination point for ATP. 4 helical membrane-spanning segments follow: residues 282–302 (ALTL…LAVG), 529–549 (LSLM…IGVM), 596–616 (IVIA…VAFA), and 617–637 (LPAI…FGFM).

Belongs to the ABC transporter superfamily. Macrolide exporter (TC 3.A.1.122) family. In terms of assembly, part of the tripartite efflux system PvdRT-OpmQ, which is composed of an inner membrane component with both ATPase and permease domains, PvdT, a periplasmic membrane fusion protein, PvdR, and an outer membrane component, OpmQ.

It is found in the cell inner membrane. Its function is as follows. Part of the tripartite efflux system PvdRT-OpmQ required for the secretion into the extracellular milieu of the siderophore pyoverdine (PVD), which is involved in iron acquisition. This subunit binds PVD and drives its secretion by hydrolyzing ATP. The system is responsible for export of newly synthesized PVD after the final steps of biosynthesis have taken place in the periplasm. It is also responsible for recycling of PVD after internalization of ferri-PVD into the periplasm by the outer-membrane receptor FpvA and release of iron from PVD, thus making PVD available for new cycles of iron uptake. The polypeptide is Pyoverdine export ATP-binding/permease protein PvdT (Pseudomonas entomophila (strain L48)).